The following is a 215-amino-acid chain: 3,4-dihydroxy-2-butanone 4-phosphate synthase (215 aa).

D-ribulose 5-phosphate-binding positions include 37–38 (RE), Asp42, 150–154 (RPGHT), and Glu174. Glu38 is a Mg(2+) binding site. His153 contacts Mg(2+).

Belongs to the DHBP synthase family. Homodimer. Requires Mg(2+) as cofactor. It depends on Mn(2+) as a cofactor.

It carries out the reaction D-ribulose 5-phosphate = (2S)-2-hydroxy-3-oxobutyl phosphate + formate + H(+). Its pathway is cofactor biosynthesis; riboflavin biosynthesis; 2-hydroxy-3-oxobutyl phosphate from D-ribulose 5-phosphate: step 1/1. Catalyzes the conversion of D-ribulose 5-phosphate to formate and 3,4-dihydroxy-2-butanone 4-phosphate. The chain is 3,4-dihydroxy-2-butanone 4-phosphate synthase from Buchnera aphidicola subsp. Acyrthosiphon pisum (strain 5A).